The chain runs to 352 residues: Protein-glutamate methylesterase/protein-glutamine glutaminase 2 (352 aa).

A Response regulatory domain is found at M1–E116. D50 carries the post-translational modification 4-aspartylphosphate. The 191-residue stretch at A162–Q352 folds into the CheB-type methylesterase domain. Active-site residues include S174, H200, and D296.

This sequence belongs to the CheB family. Phosphorylated by CheA. Phosphorylation of the N-terminal regulatory domain activates the methylesterase activity.

The protein localises to the cytoplasm. The catalysed reaction is [protein]-L-glutamate 5-O-methyl ester + H2O = L-glutamyl-[protein] + methanol + H(+). It carries out the reaction L-glutaminyl-[protein] + H2O = L-glutamyl-[protein] + NH4(+). Functionally, involved in chemotaxis. Part of a chemotaxis signal transduction system that modulates chemotaxis in response to various stimuli. Catalyzes the demethylation of specific methylglutamate residues introduced into the chemoreceptors (methyl-accepting chemotaxis proteins or MCP) by CheR. Also mediates the irreversible deamidation of specific glutamine residues to glutamic acid. The sequence is that of Protein-glutamate methylesterase/protein-glutamine glutaminase 2 from Xanthomonas campestris pv. campestris (strain ATCC 33913 / DSM 3586 / NCPPB 528 / LMG 568 / P 25).